A 159-amino-acid chain; its full sequence is MSARPEPITLYVDADACPVKAEIYKVAERHALHVHVVSNQPIAIPRDDRIHRVVVASGPDVADDWIAERVSRGDVVVTADIPLAARCVKAGADVIAPNGKAHTEATIGATLATRNLMDDLRSAGQITGGPKPFSPRDRSAFLSALDLAIVRLKRAGFTT.

The protein belongs to the UPF0178 family.

This chain is UPF0178 protein AZC_4000, found in Azorhizobium caulinodans (strain ATCC 43989 / DSM 5975 / JCM 20966 / LMG 6465 / NBRC 14845 / NCIMB 13405 / ORS 571).